A 374-amino-acid polypeptide reads, in one-letter code: Dual-specificity RNA methyltransferase RlmN (374 aa).

Residue Glu91 is the Proton acceptor of the active site. The 244-residue stretch at Glu97–Asp340 folds into the Radical SAM core domain. Residues Cys104 and Cys345 are joined by a disulfide bond. Residues Cys111, Cys115, and Cys118 each contribute to the [4Fe-4S] cluster site. S-adenosyl-L-methionine-binding positions include Gly166 to Glu167, Ser198, Ser220 to His222, and Asn302. Cys345 serves as the catalytic S-methylcysteine intermediate.

It belongs to the radical SAM superfamily. RlmN family. The cofactor is [4Fe-4S] cluster.

The protein resides in the cytoplasm. It carries out the reaction adenosine(2503) in 23S rRNA + 2 reduced [2Fe-2S]-[ferredoxin] + 2 S-adenosyl-L-methionine = 2-methyladenosine(2503) in 23S rRNA + 5'-deoxyadenosine + L-methionine + 2 oxidized [2Fe-2S]-[ferredoxin] + S-adenosyl-L-homocysteine. The catalysed reaction is adenosine(37) in tRNA + 2 reduced [2Fe-2S]-[ferredoxin] + 2 S-adenosyl-L-methionine = 2-methyladenosine(37) in tRNA + 5'-deoxyadenosine + L-methionine + 2 oxidized [2Fe-2S]-[ferredoxin] + S-adenosyl-L-homocysteine. Its function is as follows. Specifically methylates position 2 of adenine 2503 in 23S rRNA and position 2 of adenine 37 in tRNAs. m2A2503 modification seems to play a crucial role in the proofreading step occurring at the peptidyl transferase center and thus would serve to optimize ribosomal fidelity. This is Dual-specificity RNA methyltransferase RlmN from Delftia acidovorans (strain DSM 14801 / SPH-1).